The primary structure comprises 87 residues: Translation initiation factor IF-1 2 (87 aa).

The S1-like domain maps to 1–72 (MAKEELLELD…TKGRINFRHK (72 aa)).

It belongs to the IF-1 family. Component of the 30S ribosomal translation pre-initiation complex which assembles on the 30S ribosome in the order IF-2 and IF-3, IF-1 and N-formylmethionyl-tRNA(fMet); mRNA recruitment can occur at any time during PIC assembly.

It localises to the cytoplasm. In terms of biological role, one of the essential components for the initiation of protein synthesis. Stabilizes the binding of IF-2 and IF-3 on the 30S subunit to which N-formylmethionyl-tRNA(fMet) subsequently binds. Helps modulate mRNA selection, yielding the 30S pre-initiation complex (PIC). Upon addition of the 50S ribosomal subunit IF-1, IF-2 and IF-3 are released leaving the mature 70S translation initiation complex. This is Translation initiation factor IF-1 2 from Burkholderia ambifaria (strain ATCC BAA-244 / DSM 16087 / CCUG 44356 / LMG 19182 / AMMD) (Burkholderia cepacia (strain AMMD)).